The following is a 327-amino-acid chain: Fructose-1,6-bisphosphatase class 1 (327 aa).

Mg(2+)-binding residues include Glu-84, Asp-103, Leu-105, and Asp-106. Substrate contacts are provided by residues 106–109, Asn-197, and Lys-263; that span reads DGSS. Glu-269 is a binding site for Mg(2+).

This sequence belongs to the FBPase class 1 family. As to quaternary structure, homotetramer. Mg(2+) serves as cofactor.

The protein resides in the cytoplasm. The enzyme catalyses beta-D-fructose 1,6-bisphosphate + H2O = beta-D-fructose 6-phosphate + phosphate. It functions in the pathway carbohydrate biosynthesis; gluconeogenesis. This chain is Fructose-1,6-bisphosphatase class 1, found in Idiomarina loihiensis (strain ATCC BAA-735 / DSM 15497 / L2-TR).